The chain runs to 25 residues: Histone H4 (25 aa).

Positions 1 to 14 are enriched in gly residues; sequence MSGRGKGGKGLGKG. The disordered stretch occupies residues 1–25; it reads MSGRGKGGKGLGKGGAKRHRKVLRD. Serine 2 carries the post-translational modification N-acetylserine. N6-acetyllysine occurs at positions 6, 9, 13, 17, and 21. Residues 15–25 are compositionally biased toward basic residues; that stretch reads GAKRHRKVLRD. The DNA-binding element occupies 17–21; the sequence is KRHRK.

Belongs to the histone H4 family. As to quaternary structure, the nucleosome is a histone octamer containing two molecules each of H2A, H2B, H3 and H4 assembled in one H3-H4 heterotetramer and two H2A-H2B heterodimers. The octamer wraps approximately 147 bp of DNA.

The protein resides in the nucleus. It is found in the chromosome. Core component of nucleosome. Nucleosomes wrap and compact DNA into chromatin, limiting DNA accessibility to the cellular machineries which require DNA as a template. Histones thereby play a central role in transcription regulation, DNA repair, DNA replication and chromosomal stability. DNA accessibility is regulated via a complex set of post-translational modifications of histones, also called histone code, and nucleosome remodeling. The chain is Histone H4 from Medicago sativa (Alfalfa).